The sequence spans 317 residues: Putative ribose-phosphate pyrophosphokinase (317 aa).

Residues 211 to 224 (GRDVIVLDDEIAKG) form a binding of phosphoribosylpyrophosphate region.

This sequence belongs to the ribose-phosphate pyrophosphokinase family.

It carries out the reaction D-ribose 5-phosphate + ATP = 5-phospho-alpha-D-ribose 1-diphosphate + AMP + H(+). This is Putative ribose-phosphate pyrophosphokinase from Streptomyces coelicolor (strain ATCC BAA-471 / A3(2) / M145).